We begin with the raw amino-acid sequence, 522 residues long: Cytochrome P450 4e5, mitochondrial (522 aa).

Positions 307 and 443 each coordinate heme.

Belongs to the cytochrome P450 family. Requires heme as cofactor.

The protein localises to the mitochondrion. Its function is as follows. Probably involved in steroid hormones biosynthesis. In Drosophila mettleri (Fruit fly), this protein is Cytochrome P450 4e5, mitochondrial (Cyp4e5).